The chain runs to 132 residues: Phosphomevalonate dehydratase small subunit (132 aa).

Ser61 serves as the catalytic Proton acceptor.

This sequence belongs to the AcnX type II small subunit family. As to quaternary structure, heterodimer composed of a large subunit (PMDh-L) and a small subunit (PMDh-S).

It catalyses the reaction (R)-5-phosphomevalonate = (2E)-3-methyl-5-phosphooxypent-2-enoate + H2O. Its pathway is isoprenoid biosynthesis; isopentenyl diphosphate biosynthesis via mevalonate pathway. In terms of biological role, component of a hydro-lyase that catalyzes the dehydration of mevalonate 5-phosphate (MVA5P) to form trans-anhydromevalonate 5-phosphate (tAHMP). Involved in the archaeal mevalonate (MVA) pathway, which provides fundamental precursors for isoprenoid biosynthesis, such as isopentenyl diphosphate (IPP) and dimethylallyl diphosphate (DMAPP). The protein is Phosphomevalonate dehydratase small subunit of Archaeoglobus fulgidus (strain ATCC 49558 / DSM 4304 / JCM 9628 / NBRC 100126 / VC-16).